A 119-amino-acid polypeptide reads, in one-letter code: Large ribosomal subunit protein uL22 (119 aa).

It belongs to the universal ribosomal protein uL22 family. In terms of assembly, part of the 50S ribosomal subunit.

Its function is as follows. This protein binds specifically to 23S rRNA; its binding is stimulated by other ribosomal proteins, e.g. L4, L17, and L20. It is important during the early stages of 50S assembly. It makes multiple contacts with different domains of the 23S rRNA in the assembled 50S subunit and ribosome. The globular domain of the protein is located near the polypeptide exit tunnel on the outside of the subunit, while an extended beta-hairpin is found that lines the wall of the exit tunnel in the center of the 70S ribosome. The polypeptide is Large ribosomal subunit protein uL22 (Rickettsia rickettsii (strain Iowa)).